A 964-amino-acid polypeptide reads, in one-letter code: Cycloisomaltooligosaccharide glucanotransferase (964 aa).

The first 30 residues, 1–30, serve as a signal peptide directing secretion; it reads MRVKILPLVFMTLLLIVPSQMLLPSGQANA. 2 CBM6 domains span residues 413 to 538 and 740 to 863; these read DRYE…LTLG and NMYE…LKLD.

The protein belongs to the glycosyl hydrolase 66 family.

It carries out the reaction cyclizes part of a (1-&gt;6)-alpha-D-glucan chain by formation of a (1-&gt;6)-alpha-D-glucosidic bond.. Functionally, produces cycloisomaltooligosaccharide from dextran. This is Cycloisomaltooligosaccharide glucanotransferase (cit) from Niallia circulans (Bacillus circulans).